A 243-amino-acid chain; its full sequence is Tryptophan synthase alpha chain (243 aa).

Catalysis depends on proton acceptor residues Glu31 and Asp42.

It belongs to the TrpA family. In terms of assembly, tetramer of two alpha and two beta chains.

It catalyses the reaction (1S,2R)-1-C-(indol-3-yl)glycerol 3-phosphate + L-serine = D-glyceraldehyde 3-phosphate + L-tryptophan + H2O. It functions in the pathway amino-acid biosynthesis; L-tryptophan biosynthesis; L-tryptophan from chorismate: step 5/5. In terms of biological role, the alpha subunit is responsible for the aldol cleavage of indoleglycerol phosphate to indole and glyceraldehyde 3-phosphate. The sequence is that of Tryptophan synthase alpha chain from Staphylococcus haemolyticus (strain JCSC1435).